Reading from the N-terminus, the 481-residue chain is Tripartite motif-containing protein 10 (481 aa).

The RING-type zinc finger occupies 16 to 61 (CPICQGTLREPVTIDCGHNFCRACLTRYCEIPGPDLEESPTCPLCK). The B box-type zinc-finger motif lies at 94-135 (GEEDVCQEHGEKIYFFCEDDEMQLCVVCREAGEHATHTMRFL). The Zn(2+) site is built by Cys-99, His-102, Cys-121, and His-127. Residues 142 to 177 (YREQIHKCLKRLRKEREETQEIQSRENKRMQVLLTQ) adopt a coiled-coil conformation. The B30.2/SPRY domain occupies 292–481 (REMKMFLEKL…GRGSSFFLSS (190 aa)).

This sequence belongs to the TRIM/RBCC family. In terms of assembly, interacts with IFNAR1; this interaction prevents association of IFNAR1 with TYK2.

The protein resides in the cytoplasm. Its function is as follows. E3 ligase that plays an essential role in the differentiation and survival of terminal erythroid cells. May directly bind to PTEN and promote its ubiquitination, resulting in its proteasomal degradation and activation of hypertrophic signaling. In addition, plays a role in immune response regulation by repressing the phosphorylation of STAT1 and STAT2 in the interferon/JAK/STAT signaling pathway independent of its E3 ligase activity. Mechanistically, interacts with the intracellular domain of IFNAR1 and thereby inhibits the association of TYK2 and IFNAR1. The protein is Tripartite motif-containing protein 10 (TRIM10) of Pan troglodytes (Chimpanzee).